The chain runs to 213 residues: MSEKSQCVIVGIAGASASGKSLIASTIYNELRAKVGDHQIGVITEDCYYNDQSHLSMEERVKTNYDHPNALDHDLLCEHLEKLMKGESVEVPEYSYTEHTRTENTTTMTPKKVIILEGILLLTDPRLRDLMHATVFMDTPLDICLLRRVKRDVEERGRTMESVLKQYQKTVRPMFMQFIEPSKQYADIIVPRGGKNRIAIDVLKAHIAKLLKA.

An ATP-binding site is contributed by G14–S21.

It belongs to the uridine kinase family.

Its subcellular location is the cytoplasm. It catalyses the reaction uridine + ATP = UMP + ADP + H(+). It carries out the reaction cytidine + ATP = CMP + ADP + H(+). The protein operates within pyrimidine metabolism; CTP biosynthesis via salvage pathway; CTP from cytidine: step 1/3. It participates in pyrimidine metabolism; UMP biosynthesis via salvage pathway; UMP from uridine: step 1/1. The polypeptide is Uridine kinase (Vibrio vulnificus (strain CMCP6)).